The sequence spans 295 residues: Methionine aminopeptidase (295 aa).

Residue histidine 62 coordinates substrate. The a divalent metal cation site is built by aspartate 82, aspartate 93, and histidine 153. A substrate-binding site is contributed by histidine 161. A divalent metal cation is bound by residues glutamate 187 and glutamate 280.

This sequence belongs to the peptidase M24A family. Methionine aminopeptidase archaeal type 2 subfamily. Monomer. Requires Co(2+) as cofactor. Zn(2+) is required as a cofactor. It depends on Mn(2+) as a cofactor. Fe(2+) serves as cofactor.

The enzyme catalyses Release of N-terminal amino acids, preferentially methionine, from peptides and arylamides.. In terms of biological role, removes the N-terminal methionine from nascent proteins. The N-terminal methionine is often cleaved when the second residue in the primary sequence is small and uncharged (Met-Ala-, Cys, Gly, Pro, Ser, Thr, or Val). The chain is Methionine aminopeptidase from Pyrococcus horikoshii (strain ATCC 700860 / DSM 12428 / JCM 9974 / NBRC 100139 / OT-3).